The sequence spans 94 residues: Pyrimidine/purine nucleoside phosphorylase (94 aa).

It belongs to the nucleoside phosphorylase PpnP family.

It carries out the reaction a purine D-ribonucleoside + phosphate = a purine nucleobase + alpha-D-ribose 1-phosphate. The catalysed reaction is adenosine + phosphate = alpha-D-ribose 1-phosphate + adenine. It catalyses the reaction cytidine + phosphate = cytosine + alpha-D-ribose 1-phosphate. The enzyme catalyses guanosine + phosphate = alpha-D-ribose 1-phosphate + guanine. It carries out the reaction inosine + phosphate = alpha-D-ribose 1-phosphate + hypoxanthine. The catalysed reaction is thymidine + phosphate = 2-deoxy-alpha-D-ribose 1-phosphate + thymine. It catalyses the reaction uridine + phosphate = alpha-D-ribose 1-phosphate + uracil. The enzyme catalyses xanthosine + phosphate = alpha-D-ribose 1-phosphate + xanthine. In terms of biological role, catalyzes the phosphorolysis of diverse nucleosides, yielding D-ribose 1-phosphate and the respective free bases. Can use uridine, adenosine, guanosine, cytidine, thymidine, inosine and xanthosine as substrates. Also catalyzes the reverse reactions. The chain is Pyrimidine/purine nucleoside phosphorylase from Pectobacterium atrosepticum (strain SCRI 1043 / ATCC BAA-672) (Erwinia carotovora subsp. atroseptica).